The following is a 1041-amino-acid chain: Beta-galactosidase (1041 aa).

Substrate-binding residues include Asn103 and Asp201. Residue Asp201 participates in Na(+) binding. Mg(2+) contacts are provided by Glu415, His417, and Glu460. Residues Glu460 and 536-539 contribute to the substrate site; that span reads EYAH. The Proton donor role is filled by Glu460. The active-site Nucleophile is the Glu536. Asn596 contributes to the Mg(2+) binding site. Na(+) contacts are provided by Phe600 and Asn603. Residues Asn603 and Trp1016 each coordinate substrate.

Belongs to the glycosyl hydrolase 2 family. As to quaternary structure, homotetramer. The cofactor is Mg(2+). Requires Na(+) as cofactor.

It carries out the reaction Hydrolysis of terminal non-reducing beta-D-galactose residues in beta-D-galactosides.. This chain is Beta-galactosidase, found in Alteromonas mediterranea (strain DSM 17117 / CIP 110805 / LMG 28347 / Deep ecotype).